Consider the following 624-residue polypeptide: Chaperone protein DnaK (624 aa).

The residue at position 174 (threonine 174) is a Phosphothreonine; by autocatalysis. Disordered stretches follow at residues 470–504 and 577–624; these read ITIK…KEEV and NGGA…DPDK. Residues 481 to 504 are compositionally biased toward basic and acidic residues; the sequence is EEIKKMQKDAEEHAEEDKKRKEEV. The span at 577–605 shows a compositional bias: low complexity; the sequence is NGGAQGAAGQAGPQGPQNGGQPNNDNGSD. Residues 615–624 show a composition bias toward basic and acidic residues; the sequence is GDFHKVDPDK.

The protein belongs to the heat shock protein 70 family.

In terms of biological role, acts as a chaperone. This is Chaperone protein DnaK from Lactobacillus johnsonii (strain CNCM I-12250 / La1 / NCC 533).